A 275-amino-acid polypeptide reads, in one-letter code: Shikimate dehydrogenase (NADP(+)) (275 aa).

Shikimate is bound by residues 19 to 21 (SIS) and Thr-66. The Proton acceptor role is filled by Lys-70. Residues Asn-91 and Asp-106 each contribute to the shikimate site. NADP(+) contacts are provided by residues 129–133 (GAGGA), 153–158 (NRTYGR), and Ile-219. Tyr-221 is a shikimate binding site. Gly-242 contributes to the NADP(+) binding site.

This sequence belongs to the shikimate dehydrogenase family. Homodimer.

The enzyme catalyses shikimate + NADP(+) = 3-dehydroshikimate + NADPH + H(+). It functions in the pathway metabolic intermediate biosynthesis; chorismate biosynthesis; chorismate from D-erythrose 4-phosphate and phosphoenolpyruvate: step 4/7. Its function is as follows. Involved in the biosynthesis of the chorismate, which leads to the biosynthesis of aromatic amino acids. Catalyzes the reversible NADPH linked reduction of 3-dehydroshikimate (DHSA) to yield shikimate (SA). The protein is Shikimate dehydrogenase (NADP(+)) of Dictyoglomus thermophilum (strain ATCC 35947 / DSM 3960 / H-6-12).